Consider the following 228-residue polypeptide: 2-C-methyl-D-erythritol 4-phosphate cytidylyltransferase (228 aa).

This sequence belongs to the IspD/TarI cytidylyltransferase family. IspD subfamily.

It carries out the reaction 2-C-methyl-D-erythritol 4-phosphate + CTP + H(+) = 4-CDP-2-C-methyl-D-erythritol + diphosphate. The protein operates within isoprenoid biosynthesis; isopentenyl diphosphate biosynthesis via DXP pathway; isopentenyl diphosphate from 1-deoxy-D-xylulose 5-phosphate: step 2/6. Functionally, catalyzes the formation of 4-diphosphocytidyl-2-C-methyl-D-erythritol from CTP and 2-C-methyl-D-erythritol 4-phosphate (MEP). The sequence is that of 2-C-methyl-D-erythritol 4-phosphate cytidylyltransferase from Trichormus variabilis (strain ATCC 29413 / PCC 7937) (Anabaena variabilis).